We begin with the raw amino-acid sequence, 278 residues long: Large ribosomal subunit protein uL24m (278 aa).

Residues 109 to 142 (FFPGDLVQVMVGKDKGRQGLVLTISRDSSEVVVD) enclose the KOW domain.

Belongs to the universal ribosomal protein uL24 family.

The protein localises to the mitochondrion. This chain is Large ribosomal subunit protein uL24m (mrpl-24), found in Caenorhabditis briggsae.